Here is a 1004-residue protein sequence, read N- to C-terminus: Hyaluronate lyase HylB (1004 aa).

The signal sequence occupies residues 1-29 (MKNRKIWVMLVGLFTALTNGFMGTTLTFA). Active-site residues include His-468, Tyr-477, and Arg-531.

It belongs to the polysaccharide lyase 8 family.

It localises to the secreted. It carries out the reaction [hyaluronan](n) = n 3-(4-deoxy-beta-D-gluc-4-enuronosyl)-N-acetyl-D-glucosamine + H2O. The enzyme catalyses Eliminative degradation of polysaccharides containing 1,4-beta-D-hexosaminyl and 1,3-beta-D-glucuronosyl linkages to disaccharides containing 4-deoxy-beta-D-gluc-4-enuronosyl groups.. Its function is as follows. Degrades hyaluronic acid (HA) and chondroitin sulfate (CS) A in vitro. Is not active against heparin sodium salt (HS). Involved in the pathogenesis of vancomycin-resistant E.faecalis infections. Contributes to attenuation of the lipopolysaccharide (LPS)-mediated nuclear factor (NF)-kappa-B activation assayed in the mouse RAW-Blue reporter macrophages. The polypeptide is Hyaluronate lyase HylB (Enterococcus faecalis (strain ATCC 700802 / V583)).